A 336-amino-acid chain; its full sequence is O-methyltransferase 2 (336 aa).

S-adenosyl-L-methionine-binding residues include Gly170, Asp198, Asn221, Phe222, and Lys237. The active-site Proton acceptor is His241.

It belongs to the class I-like SAM-binding methyltransferase superfamily. Cation-independent O-methyltransferase family. COMT subfamily.

It carries out the reaction (3,5-dichloro-2,4,6-trihydroxyphenyl)hexan-1-one + S-adenosyl-L-methionine = 1-(3,5-dichloro-2,6-dihydroxy-4-methoxyphenyl)hexan-1-one + S-adenosyl-L-homocysteine + H(+). This Dictyostelium discoideum (Social amoeba) protein is O-methyltransferase 2 (omt2).